The chain runs to 99 residues: Aspartyl/glutamyl-tRNA(Asn/Gln) amidotransferase subunit C (99 aa).

The protein belongs to the GatC family. As to quaternary structure, heterotrimer of A, B and C subunits.

It carries out the reaction L-glutamyl-tRNA(Gln) + L-glutamine + ATP + H2O = L-glutaminyl-tRNA(Gln) + L-glutamate + ADP + phosphate + H(+). The enzyme catalyses L-aspartyl-tRNA(Asn) + L-glutamine + ATP + H2O = L-asparaginyl-tRNA(Asn) + L-glutamate + ADP + phosphate + 2 H(+). In terms of biological role, allows the formation of correctly charged Asn-tRNA(Asn) or Gln-tRNA(Gln) through the transamidation of misacylated Asp-tRNA(Asn) or Glu-tRNA(Gln) in organisms which lack either or both of asparaginyl-tRNA or glutaminyl-tRNA synthetases. The reaction takes place in the presence of glutamine and ATP through an activated phospho-Asp-tRNA(Asn) or phospho-Glu-tRNA(Gln). The polypeptide is Aspartyl/glutamyl-tRNA(Asn/Gln) amidotransferase subunit C (Burkholderia thailandensis (strain ATCC 700388 / DSM 13276 / CCUG 48851 / CIP 106301 / E264)).